Consider the following 427-residue polypeptide: Serine--tRNA ligase (427 aa).

230–232 (TAE) is a binding site for L-serine. Position 261–263 (261–263 (RAE)) interacts with ATP. Residue glutamate 284 coordinates L-serine. 348-351 (EISS) contacts ATP. Residue serine 384 participates in L-serine binding.

It belongs to the class-II aminoacyl-tRNA synthetase family. Type-1 seryl-tRNA synthetase subfamily. As to quaternary structure, homodimer. The tRNA molecule binds across the dimer.

It is found in the cytoplasm. It carries out the reaction tRNA(Ser) + L-serine + ATP = L-seryl-tRNA(Ser) + AMP + diphosphate + H(+). The catalysed reaction is tRNA(Sec) + L-serine + ATP = L-seryl-tRNA(Sec) + AMP + diphosphate + H(+). Its pathway is aminoacyl-tRNA biosynthesis; selenocysteinyl-tRNA(Sec) biosynthesis; L-seryl-tRNA(Sec) from L-serine and tRNA(Sec): step 1/1. Catalyzes the attachment of serine to tRNA(Ser). Is also able to aminoacylate tRNA(Sec) with serine, to form the misacylated tRNA L-seryl-tRNA(Sec), which will be further converted into selenocysteinyl-tRNA(Sec). In Moorella thermoacetica (strain ATCC 39073 / JCM 9320), this protein is Serine--tRNA ligase.